The following is a 999-amino-acid chain: MAATVRRQRPRRLLCWALVAVLLADLLALSDTLAVMSVDLGSESMKVAIVKPGVPMEIVLNKESRRKTPVTVTLKENERFLGDSAAGMAIKNPKATLRYFQHLLGKQADNPHVALYRSRFPEHELIVDPQRQTVRFQISPQLQFSPEEVLGMVLNYSRSLAEDFAEQPIKDAVITVPAFFNQAERRAVLQAARMAGLKVLQLINDNTATALSYGVFRRKDINSTAQNVMFYDMGSGSTVCTIVTYQTVKTKEAGMQPQLQIRGVGFDRTLGGLEMELRLREHLAKLFNEQRKGQKAKDVRENPRAMAKLLREANRLKTVLSANADHMAQIEGLMDDVDFKAKVTRVEFEELCADLFDRVPGPVQQALQSAEMSLDQIEQVILVGGATRVPKVQEVLLKAVGKEELGKNINADEAAAMGAVYQAAALSKAFKVKPFVVRDAVIYPILVEFTREVEEEPGLRSLKHNKRVLFSRMGPYPQRKVITFNRYSHDFNFHINYGDLGFLGPEDLRVFGSQNLTTVKLKGVGESFKKYPDYESKGIKAHFNLDESGVLSLDRVESVFETLVEDSPEEESTLTKLGNTISSLFGGGTSSDAKENGTDAVQEEEESPAEGSKDEPAEQGELKEEAEPPAEETSQPPPSEPKGDAAREGEKPDEKESGDKPEAQKPNEKGQAGPEGAAPAPEEDKKPKPARKQKMVEEIGVELAVLDLPDLPEDELARSVQKLEELTLRDLEKQEREKAANSLEAFIFETQDKLYQPEYQEVSTEEQREEISGKLSATSTWLEDEGFGATTVMLKDKLAELRKLCQGLFFRVEERRKWPERLSALDNLLNHSSIFLKGARLIPEMDQVFTEVEMTTLEKVINDTWAWKNATLAEQAKLPATEKPVLLSKDIEAKMMALDREVQYLLNKAKFTKPRPRPKDKNGTRAEPPLNASAGDQEEKVIPPAGQTEEAKPILEPDKEETGTEPADSEPLELGGPGAGPEQEEQSAGQKRPSKNDEL.

An N-terminal signal peptide occupies residues methionine 1–threonine 32. Residues asparagine 155, asparagine 222, and asparagine 515 are each glycosylated (N-linked (GlcNAc...) asparagine). Serine 567 carries the post-translational modification Phosphoserine. The tract at residues serine 567–lysine 694 is disordered. Polar residues predominate over residues leucine 574–serine 583. An N-linked (GlcNAc...) asparagine glycan is attached at asparagine 596. Composition is skewed to basic and acidic residues over residues glycine 611–alanine 626 and proline 641–glutamate 668. The span at lysine 669–alanine 680 shows a compositional bias: low complexity. Asparagine 830, asparagine 862, and asparagine 869 each carry an N-linked (GlcNAc...) asparagine glycan. Position 883 is an N6-acetyllysine (lysine 883). The interval alanine 909–leucine 999 is disordered. 2 N-linked (GlcNAc...) asparagine glycosylation sites follow: asparagine 922 and asparagine 931. The segment covering glutamate 949–threonine 962 has biased composition (basic and acidic residues). A Prevents secretion from ER motif is present at residues asparagine 996–leucine 999.

It belongs to the heat shock protein 70 family. In terms of assembly, part of a large chaperone multiprotein complex comprising DNAJB11, HSP90B1, HSPA5, HYOU, PDIA2, PDIA4, PDIA6, PPIB, SDF2L1, UGGT1 and very small amounts of ERP29, but not, or at very low levels, CALR nor CANX.

It localises to the endoplasmic reticulum lumen. In terms of biological role, has a pivotal role in cytoprotective cellular mechanisms triggered by oxygen deprivation. Promotes HSPA5/BiP-mediated ATP nucleotide exchange and thereby activates the unfolded protein response (UPR) pathway in the presence of endoplasmic reticulum stress. May play a role as a molecular chaperone and participate in protein folding. This Mus musculus (Mouse) protein is Hypoxia up-regulated protein 1 (Hyou1).